The sequence spans 279 residues: Undecaprenyl-diphosphatase (279 aa).

8 helical membrane-spanning segments follow: residues L2–L22, A44–I64, W85–L105, F113–I133, V163–L183, T188–L208, A223–I243, and F255–F275.

Belongs to the UppP family.

Its subcellular location is the cell membrane. It catalyses the reaction di-trans,octa-cis-undecaprenyl diphosphate + H2O = di-trans,octa-cis-undecaprenyl phosphate + phosphate + H(+). In terms of biological role, catalyzes the dephosphorylation of undecaprenyl diphosphate (UPP). Confers resistance to bacitracin. The sequence is that of Undecaprenyl-diphosphatase from Streptococcus pyogenes serotype M5 (strain Manfredo).